The primary structure comprises 134 residues: Large ribosomal subunit protein bL17 (134 aa).

This sequence belongs to the bacterial ribosomal protein bL17 family. In terms of assembly, part of the 50S ribosomal subunit. Contacts protein L32.

The protein is Large ribosomal subunit protein bL17 of Paracidovorax citrulli (strain AAC00-1) (Acidovorax citrulli).